A 201-amino-acid polypeptide reads, in one-letter code: Oxalate oxidase 1 (201 aa).

An intrachain disulfide couples cysteine 10 to cysteine 26. A Cupin type-1 domain is found at serine 40–glutamate 191. An N-linked (GlcNAc...) asparagine glycan is attached at asparagine 47. Asparagine 75 and asparagine 85 together coordinate oxalate. 4 residues coordinate Mn(2+): histidine 88, histidine 90, glutamate 95, and histidine 137. The oxalate site is built by histidine 90 and glutamate 95.

It belongs to the germin family. In terms of assembly, homo hexamer; a trimer of dimers. In terms of processing, glycosylated. A form called G contains antennary GlcNAc residues, whereas a form called G' lacks antennary GlcNAc residues in its otherwise identical glycans.

The protein localises to the secreted. It localises to the extracellular space. Its subcellular location is the apoplast. The protein resides in the cell wall. It carries out the reaction oxalate + O2 + 2 H(+) = H2O2 + 2 CO2. Releases hydrogen peroxide in the apoplast which may be important for cross-linking reactions in the cell wall biochemistry. May play an important role in several aspects of plant growth and defense mechanisms. The polypeptide is Oxalate oxidase 1 (Hordeum vulgare (Barley)).